The following is a 420-amino-acid chain: MKKVMLATALFLGLTPAGANAADLGHQTLGSNDGWGAYSTGTTGGSKASSSNVYTVSNRNQLVSALGKETNTTPKIIYIKGTIDMNVDDNLKPLGLNDYKDPEYDLDKYLKAYDPSTWGKKEPSGTQEEARARSQKNQKARVMVDIPANTTIVGSGTNAKVVGGNFQIKSDNVIIRNIEFQDAYDYFPQWDPTDGSSGNWNSQYDNITINGGTHIWIDHCTFNDGSRPDSTSPKYYGRKYQHHDGQTDASNGANYITMSYNYYHDHDKSSIFGSSDSKTSDDGKLKITLHHNRYKNIVQRAPRVRFGQVHVYNNYYEGSTSSSSYPFSYAWGIGKSSKIYAQNNVIDVPGLSAAKTISVFSGGTALYDSGTLLNGTQINASAANGLSSSVGWTPSLHGSIDASANVKSNVINQAGAGKLN.

A signal peptide spans 1 to 21; it reads MKKVMLATALFLGLTPAGANA. The disordered stretch occupies residues 117 to 139; the sequence is TWGKKEPSGTQEEARARSQKNQK. The span at 119–132 shows a compositional bias: basic and acidic residues; that stretch reads GKKEPSGTQEEARA. Residues Asp205, Asp244, and Asp248 each coordinate Ca(2+). Arg300 is a catalytic residue.

Belongs to the polysaccharide lyase 1 family. In terms of assembly, monomer. Requires Ca(2+) as cofactor.

Its subcellular location is the secreted. The enzyme catalyses Eliminative cleavage of (1-&gt;4)-alpha-D-galacturonan to give oligosaccharides with 4-deoxy-alpha-D-galact-4-enuronosyl groups at their non-reducing ends.. It functions in the pathway glycan metabolism; pectin degradation; 2-dehydro-3-deoxy-D-gluconate from pectin: step 2/5. Produces unsaturated products from polygalacturonate. The chain is Pectate lyase (pel) from Bacillus subtilis (strain 168).